Here is a 435-residue protein sequence, read N- to C-terminus: MSPAANMFRTLTLTALVSAVVSAYESQVPLNPQFPEYLNEEWDDSCSISKSTAYDVHDGPNTFSSSPSEDIHSVKISPHVNATNWEQWEFDGLSHTGLSGLLMAFSRDATYAFFGQGNLRVEFYITLGDGSIIQELDFISESYVIDCPDFTAGIWNSTDRSYSFYVTKDHQFARLKFDSWRVRGGFTMSSSTRPHLADGSPWTPDGGKPDATEVSPGLFYGLSMGGAEVDVDATLSSGKRITFKGRGGSTRLWATEGWLKLCDGWKVIRAWAGPYSIVYWDVLSRIDRGVRYVSGHLFYHDELLVGSRVGQPSDKADYVLFNDQFDGEMSGKYKDKNTGHHLEFASPARDKKWTFDVQHIVTQYEIGAGAGFGMSGFANRVVGGEVGGVQYEGKGQSEQTYWPEHIEEWKIWLVWGLGFLGRGKTYVMKLVGYVL.

A signal peptide spans 1-23 (MSPAANMFRTLTLTALVSAVVSA). N-linked (GlcNAc...) asparagine glycans are attached at residues N81 and N156.

It belongs to the Diels-Alderase family.

It functions in the pathway mycotoxin biosynthesis. Hexane cyclase; part of the gene cluster that mediates the biosynthesis of xenoacremones such as xenoacremone A, a compound that shows inhibitory activity toward the PI3K/AKT signaling pathway and which has the ability to induce apoptosis of A549 lung cancer cells. Within the pathway, cooperation of the hybrid PKS-NRPS xenE and the trans-acting enoyl reductase xenG is responsible for the formation of the reduced tyrosine-nonaketide derivative. The alpha/beta hydrolase xenA then accelerates intramolecular nucleophilic attack to give a pyrrolidone derivative. Subsequently, three enzymes, xenF, xenD, and xenC, coordinately participate in the conversion to xenoacremone B. XenF catalyzes sigmatropic rearrangement to form an A-ring, which leads to an unusual intermediate with a hexane ring, which is required for the formation of the tricarbocyclic product. Epoxidation catalyzed by xenD and the formation of the paracyclophane ether catalyzed by xenC initiate a spontaneous intramolecular Diels-Alder (IMDA) reaction to yield xenoacremone B. Spontaneous hydration of xenoacremone B leads to the formation of xenoacremone A, which undergoes subsequent methylation to afford xenoacremone C. In Xenoacremonium sinensis (Endophyte fungus), this protein is Hexane cyclase xenF.